Consider the following 320-residue polypeptide: tRNA dimethylallyltransferase (320 aa).

17-24 (GPTASGKT) contributes to the ATP binding site. 19–24 (TASGKT) contributes to the substrate binding site. Interaction with substrate tRNA regions lie at residues 42-45 (DSAL), 166-170 (QRIQR), and 249-254 (RCVGYR).

The protein belongs to the IPP transferase family. Monomer. The cofactor is Mg(2+).

It catalyses the reaction adenosine(37) in tRNA + dimethylallyl diphosphate = N(6)-dimethylallyladenosine(37) in tRNA + diphosphate. In terms of biological role, catalyzes the transfer of a dimethylallyl group onto the adenine at position 37 in tRNAs that read codons beginning with uridine, leading to the formation of N6-(dimethylallyl)adenosine (i(6)A). This Herminiimonas arsenicoxydans protein is tRNA dimethylallyltransferase.